Here is an 80-residue protein sequence, read N- to C-terminus: RNA-binding protein KhpA (80 aa).

A KH domain is found at 33–80; sequence GRTVEVHVHPDDLGKVIGRGGRTATALRKLVAGIGGRGIRVDVVDTDQ.

The protein belongs to the KhpA RNA-binding protein family.

The protein localises to the cytoplasm. In terms of biological role, a probable RNA-binding protein. The sequence is that of RNA-binding protein KhpA from Mycobacterium leprae (strain TN).